A 285-amino-acid polypeptide reads, in one-letter code: UPF0354 protein SACOL1793 (285 aa).

The protein belongs to the UPF0354 family.

The chain is UPF0354 protein SACOL1793 from Staphylococcus aureus (strain COL).